A 265-amino-acid polypeptide reads, in one-letter code: Mlc titration factor A (265 aa).

Zn(2+) contacts are provided by His111, His148, His152, and Glu211.

Belongs to the MtfA family. As to quaternary structure, interacts with Mlc. The cofactor is Zn(2+).

It localises to the cytoplasm. Its function is as follows. Involved in the modulation of the activity of the glucose-phosphotransferase system (glucose-PTS). Interacts with the transcriptional repressor Mlc, preventing its interaction with DNA and leading to the modulation of expression of genes regulated by Mlc, including ptsG, which encodes the PTS system glucose-specific EIICB component. Shows zinc-dependent metallopeptidase activity. This is Mlc titration factor A from Escherichia coli (strain ATCC 8739 / DSM 1576 / NBRC 3972 / NCIMB 8545 / WDCM 00012 / Crooks).